The primary structure comprises 533 residues: Intestinal-type alkaline phosphatase (533 aa).

The first 19 residues, 1–19 (MQGACVLLLLGLHLQLSLG), serve as a signal peptide directing secretion. D61 provides a ligand contact to Mg(2+). Residues D61 and S111 each coordinate Zn(2+). Residue S111 is the Phosphoserine intermediate of the active site. Cysteines 140 and 202 form a disulfide. S174 lines the Mg(2+) pocket. E235 contacts Ca(2+). The N-linked (GlcNAc...) asparagine glycan is linked to N268. Ca(2+) contacts are provided by F288, E289, and D304. E330 is a Mg(2+) binding site. The Zn(2+) site is built by D335, H339, D376, and H377. Residue N429 is glycosylated (N-linked (GlcNAc...) asparagine). H451 contacts Zn(2+). A disulfide bridge links C486 with C493. D506 carries GPI-anchor amidated aspartate lipidation. Residues 507–533 (AAHLAASPPPLALLAGAMLLLLAPTLY) constitute a propeptide, removed in mature form.

Belongs to the alkaline phosphatase family. As to quaternary structure, homodimer. The cofactor is Mg(2+). Requires Zn(2+) as cofactor. Ca(2+) is required as a cofactor.

Its subcellular location is the cell membrane. It carries out the reaction a phosphate monoester + H2O = an alcohol + phosphate. Functionally, alkaline phosphatase that can hydrolyze various phosphate compounds. The polypeptide is Intestinal-type alkaline phosphatase (ALPI) (Bos taurus (Bovine)).